The chain runs to 154 residues: Myoglobin (154 aa).

Residues G2–K148 enclose the Globin domain. Residue S4 is modified to Phosphoserine. H65 provides a ligand contact to nitrite. H65 serves as a coordination point for O2. T68 carries the post-translational modification Phosphothreonine. Residue H94 coordinates heme b.

This sequence belongs to the globin family. In terms of assembly, monomeric.

Its subcellular location is the cytoplasm. The protein resides in the sarcoplasm. The catalysed reaction is Fe(III)-heme b-[protein] + nitric oxide + H2O = Fe(II)-heme b-[protein] + nitrite + 2 H(+). The enzyme catalyses H2O2 + AH2 = A + 2 H2O. Monomeric heme protein which primary function is to store oxygen and facilitate its diffusion within muscle tissues. Reversibly binds oxygen through a pentacoordinated heme iron and enables its timely and efficient release as needed during periods of heightened demand. Depending on the oxidative conditions of tissues and cells, and in addition to its ability to bind oxygen, it also has a nitrite reductase activity whereby it regulates the production of bioactive nitric oxide. Under stress conditions, like hypoxia and anoxia, it also protects cells against reactive oxygen species thanks to its pseudoperoxidase activity. The protein is Myoglobin (MB) of Halichoerus grypus (Gray seal).